A 711-amino-acid polypeptide reads, in one-letter code: Polyribonucleotide nucleotidyltransferase (711 aa).

An FFRR loop; important for RNA binding region spans residues 77–80 (FFRR). The interval 327 to 331 (LDVRT) is interaction with RNase E. Positions 486 and 492 each coordinate Mg(2+). The region spanning 553–612 (PRIHTIKINPDKIKDVIGKGGSVIRALTEETGTTIEIEDDGTVKIAATDGEKAKHAIRRI) is the KH domain. The 69-residue stretch at 622-690 (GRVYTGKVTR…RQGRIRLSIK (69 aa)) folds into the S1 motif domain. The tract at residues 689 to 711 (IKEATEQSQPAAAPEAPAAEQGE) is disordered. The span at 694 to 711 (EQSQPAAAPEAPAAEQGE) shows a compositional bias: low complexity.

This sequence belongs to the polyribonucleotide nucleotidyltransferase family. As to quaternary structure, component of the RNA degradosome, which is a multiprotein complex involved in RNA processing and mRNA degradation. Interacts with RNase E (rne). Homotrimer. The homotrimer forms a ring-like structure with a central channel, where RNA molecules can bind. RNA molecules bind between neighboring subunits. Might interact with YicC. The cofactor is Mg(2+). It depends on Mn(2+) as a cofactor.

The protein resides in the cytoplasm. The enzyme catalyses RNA(n+1) + phosphate = RNA(n) + a ribonucleoside 5'-diphosphate. In terms of biological role, involved in mRNA degradation. Catalyzes the phosphorolysis of single-stranded polyribonucleotides processively in the 3'- to 5'-direction. Also involved, along with RNase II, in tRNA processing. RNases II and R contribute to rRNA degradation during starvation, while RNase R and PNPase are the major contributors to quality control of rRNA during steady state growth. Contributes to degradation of some small RNAs (sRNA). The protein is Polyribonucleotide nucleotidyltransferase of Escherichia coli (strain K12).